A 273-amino-acid polypeptide reads, in one-letter code: HMP-PP phosphatase (273 aa).

Aspartate 8 (nucleophile) is an active-site residue. Positions 8, 10, and 212 each coordinate Mg(2+).

The protein belongs to the HAD-like hydrolase superfamily. Cof family. Requires Mg(2+) as cofactor.

It catalyses the reaction 4-amino-2-methyl-5-(diphosphooxymethyl)pyrimidine + H2O = 4-amino-2-methyl-5-(phosphooxymethyl)pyrimidine + phosphate + H(+). In terms of biological role, catalyzes the hydrolysis of 4-amino-2-methyl-5-hydroxymethylpyrimidine pyrophosphate (HMP-PP) to 4-amino-2-methyl-5-hydroxymethylpyrimidine phosphate (HMP-P). This is HMP-PP phosphatase from Yersinia pseudotuberculosis serotype IB (strain PB1/+).